The sequence spans 365 residues: Flagellar P-ring protein (365 aa).

The signal sequence occupies residues 1-19 (MIKFLSALILLLVTTAAQA).

Belongs to the FlgI family. As to quaternary structure, the basal body constitutes a major portion of the flagellar organelle and consists of four rings (L,P,S, and M) mounted on a central rod.

The protein localises to the periplasm. It is found in the bacterial flagellum basal body. Functionally, assembles around the rod to form the L-ring and probably protects the motor/basal body from shearing forces during rotation. The protein is Flagellar P-ring protein of Shigella boydii serotype 4 (strain Sb227).